Here is a 729-residue protein sequence, read N- to C-terminus: Rho GTPase-activating protein 28 (729 aa).

Disordered regions lie at residues 20–42 and 55–105; these read AQPP…LSRK and SNES…AEVT. Residues 65–75 show a composition bias toward polar residues; the sequence is SRSNSEASVDS. Residue S72 is modified to Phosphoserine. Over residues 80 to 89 the composition is skewed to basic and acidic residues; the sequence is DFWREIESIK. T159 carries the post-translational modification Phosphothreonine. Positions 176-236 are disordered; that stretch reads GVSESPPRDT…SQDKEGSFAV (61 aa). A compositionally biased stretch (basic and acidic residues) spans 195–204; that stretch reads GTKEERELPR. Residues 217 to 226 show a composition bias toward polar residues; it reads SLNSTTLSDA. The region spanning 380-577 is the Rho-GAP domain; sequence VPLTVLLDGD…LMLKYQKILW (198 aa). A disordered region spans residues 612–631; sequence TLERETASPKTSKVLQKSPS. Positions 619–630 are enriched in polar residues; that stretch reads SPKTSKVLQKSP.

Expressed in testis. Expressed at moderate level in kidney and ovary, and weakly expressed in spleen and skeletal muscle.

In terms of biological role, GTPase activator for the Rho-type GTPases by converting them to an inactive GDP-bound state. The sequence is that of Rho GTPase-activating protein 28 (ARHGAP28) from Homo sapiens (Human).